A 388-amino-acid polypeptide reads, in one-letter code: tRNA-specific adenosine deaminase 1 (388 aa).

One can recognise an A to I editase domain in the interval 63-388; the sequence is CLATGVKCTP…PNGGNEFQWI (326 aa). Position 89 (H89) interacts with Zn(2+). E91 functions as the Proton donor in the catalytic mechanism. Position 96 (R96) interacts with 1D-myo-inositol hexakisphosphate. C144 and C201 together coordinate Zn(2+). 1D-myo-inositol hexakisphosphate is bound by residues K204, K357, and R363.

It belongs to the ADAT1 family. 1D-myo-inositol hexakisphosphate serves as cofactor. Zn(2+) is required as a cofactor.

Its subcellular location is the cytoplasm. It is found in the nucleus. It carries out the reaction adenosine(37) in tRNA(Ala) + H2O + H(+) = inosine(37) in tRNA(Ala) + NH4(+). Its function is as follows. Deaminates adenosine-37 to inosine in tRNA-Ala. This is tRNA-specific adenosine deaminase 1 from Schizosaccharomyces pombe (strain 972 / ATCC 24843) (Fission yeast).